We begin with the raw amino-acid sequence, 210 residues long: Peptidyl-tRNA hydrolase (210 aa).

Y15 serves as a coordination point for tRNA. The Proton acceptor role is filled by H20. 3 residues coordinate tRNA: F66, N68, and N114. A disordered region spans residues 186–210 (IHTSKPPRPKPPRREPGDGGTPATA).

The protein belongs to the PTH family. Monomer.

It is found in the cytoplasm. The enzyme catalyses an N-acyl-L-alpha-aminoacyl-tRNA + H2O = an N-acyl-L-amino acid + a tRNA + H(+). Its function is as follows. Hydrolyzes ribosome-free peptidyl-tRNAs (with 1 or more amino acids incorporated), which drop off the ribosome during protein synthesis, or as a result of ribosome stalling. Functionally, catalyzes the release of premature peptidyl moieties from peptidyl-tRNA molecules trapped in stalled 50S ribosomal subunits, and thus maintains levels of free tRNAs and 50S ribosomes. The sequence is that of Peptidyl-tRNA hydrolase from Variovorax paradoxus (strain S110).